Reading from the N-terminus, the 320-residue chain is MRQTKTGILLANLGTPDAPTSEAVKRYLKQFLSDRRVVDTPRLLWWPLLRGVILPLRSPRVAKLYQSIWMDGGSPLMVYSREQQQALAARLPDTPVALGMSYGSPSLESAVDELLASDVDHIVVLPLYPQYSCSTVGAVWDELGRILARKRRIPGISFIRDYADDGAYIDALAKSARESFARHGEPDVLLLSYHGIPQRYADEGDDYPQRCRDTTRELVSALGLPPEKVMMTFQSRFGREPWLTPYTDETLKMLGEKGTGHIQVMCPGFAADCLETLEEIAEQNREIFLEAGGKKYAYIPALNATPEHIDMMLKLTAPYR.

The Fe cation site is built by His194 and Glu275.

Belongs to the ferrochelatase family. Monomer.

Its subcellular location is the cytoplasm. It carries out the reaction heme b + 2 H(+) = protoporphyrin IX + Fe(2+). The protein operates within porphyrin-containing compound metabolism; protoheme biosynthesis; protoheme from protoporphyrin-IX: step 1/1. Catalyzes the ferrous insertion into protoporphyrin IX. This Salmonella schwarzengrund (strain CVM19633) protein is Ferrochelatase.